The chain runs to 461 residues: Proton extrusion protein PxcA (461 aa).

4 helical membrane-spanning segments follow: residues 244 to 264 (FMLLLVILPLLTQQISKALIV), 339 to 359 (LKNILSDALGFTVFLALVFTG), 386 to 406 (IILFTDVFVGFHSPHGWEVLV), and 421 to 441 (FINMFIATFPVMLDTVFKYWI).

This sequence belongs to the CemA family.

It is found in the cell inner membrane. Required for H(+) efflux immediately after light irradiation to form a rapid H(+) concentration gradient across the thylakoid membranes. Together with PxcL, contributes to transient H(+) uptake following dark to light transition. The sequence is that of Proton extrusion protein PxcA from Thermosynechococcus vestitus (strain NIES-2133 / IAM M-273 / BP-1).